We begin with the raw amino-acid sequence, 437 residues long: Magnetosome protein MamN (437 aa).

Helical transmembrane passes span 26–46 (LAVLAGAAVLVVIGTISGTYT), 53–73 (SIYFETLALIFGMAAISALLA), 95–115 (WILVMMALVTYGISLASNSLI), 136–156 (VPVIIAEIIAANLGGSSTMIG), 174–194 (FIGGMMPACLILLAVTFLFFE), 229–249 (YGLIIFFITVIGLVLAGPLKV), 252–268 (GWIAFVAGLTALALGRF), 281–301 (DILFFGGLFVMVGALTSVGIL), 320–340 (AILLMWMAAGVTIFVGGGTSA), 358–378 (AAWWALALGIMAGSCAALSGA), and 416–436 (WGLPLMGIFLVLSTVYIAVLA).

This sequence belongs to the arsenite-antimonite (ArsB) efflux (TC 2.A.45) family.

It is found in the magnetosome membrane. In terms of biological role, plays a role in biomineralization; might regulate pH in the magnetosome. In Magnetospirillum gryphiswaldense (strain DSM 6361 / JCM 21280 / NBRC 15271 / MSR-1), this protein is Magnetosome protein MamN.